The following is a 128-amino-acid chain: Small ribosomal subunit protein uS11 (128 aa).

Belongs to the universal ribosomal protein uS11 family. In terms of assembly, part of the 30S ribosomal subunit. Interacts with proteins S7 and S18. Binds to IF-3.

In terms of biological role, located on the platform of the 30S subunit, it bridges several disparate RNA helices of the 16S rRNA. Forms part of the Shine-Dalgarno cleft in the 70S ribosome. This is Small ribosomal subunit protein uS11 from Chloroherpeton thalassium (strain ATCC 35110 / GB-78).